Reading from the N-terminus, the 284-residue chain is Riboflavin transporter (284 aa).

EamA domains lie at 2 to 129 (VAAC…LIII) and 141 to 273 (LLPI…SLYL). 8 helical membrane-spanning segments follow: residues 26–46 (SVII…PLLV), 58–78 (FGLH…WIYA), 82–102 (VPIW…ILCA), 115–135 (LLTT…WSDS), 136–156 (YTVY…YSVM), 167–187 (ASIS…LWLA), 195–215 (ITAP…FTAL), and 247–267 (GWIV…ALII).

The protein belongs to the drug/metabolite transporter (DMT) superfamily. 10 TMS drug/metabolite exporter (DME) (TC 2.A.7.3) family.

The protein resides in the cell membrane. Functionally, transports riboflavin into the cell. The polypeptide is Riboflavin transporter (Brucella anthropi (strain ATCC 49188 / DSM 6882 / CCUG 24695 / JCM 21032 / LMG 3331 / NBRC 15819 / NCTC 12168 / Alc 37) (Ochrobactrum anthropi)).